The sequence spans 435 residues: Histidinol dehydrogenase (435 aa).

NAD(+) is bound by residues tyrosine 131, glutamine 189, and asparagine 212. Substrate-binding residues include serine 238, glutamine 260, and histidine 263. Residues glutamine 260 and histidine 263 each coordinate Zn(2+). Active-site proton acceptor residues include glutamate 327 and histidine 328. Positions 328, 361, 415, and 420 each coordinate substrate. Aspartate 361 provides a ligand contact to Zn(2+). Histidine 420 contacts Zn(2+).

The protein belongs to the histidinol dehydrogenase family. As to quaternary structure, homodimer. It depends on Zn(2+) as a cofactor.

The catalysed reaction is L-histidinol + 2 NAD(+) + H2O = L-histidine + 2 NADH + 3 H(+). The protein operates within amino-acid biosynthesis; L-histidine biosynthesis; L-histidine from 5-phospho-alpha-D-ribose 1-diphosphate: step 9/9. In terms of biological role, catalyzes the sequential NAD-dependent oxidations of L-histidinol to L-histidinaldehyde and then to L-histidine. The sequence is that of Histidinol dehydrogenase from Buchnera aphidicola subsp. Baizongia pistaciae (strain Bp).